Consider the following 215-residue polypeptide: Cytochrome b6 (215 aa).

Residues 32-52 (IFYCLGGITLTCFLIQFATGF) form a helical membrane-spanning segment. Residue Cys-35 coordinates heme c. The heme b site is built by His-86 and His-100. A run of 3 helical transmembrane segments spans residues 90–110 (ASMM…TGGF), 116–136 (LTWV…VTGY), and 186–206 (LHTF…FLMI). Heme b-binding residues include His-187 and His-202.

The protein belongs to the cytochrome b family. PetB subfamily. The 4 large subunits of the cytochrome b6-f complex are cytochrome b6, subunit IV (17 kDa polypeptide, PetD), cytochrome f and the Rieske protein, while the 4 small subunits are PetG, PetL, PetM and PetN. The complex functions as a dimer. Heme b is required as a cofactor. It depends on heme c as a cofactor.

It is found in the cellular thylakoid membrane. Functionally, component of the cytochrome b6-f complex, which mediates electron transfer between photosystem II (PSII) and photosystem I (PSI), cyclic electron flow around PSI, and state transitions. This is Cytochrome b6 from Synechococcus elongatus.